The sequence spans 135 residues: NADH-quinone oxidoreductase subunit A (135 aa).

A run of 3 helical transmembrane segments spans residues 9 to 29 (YFPI…LLTV), 67 to 87 (VGML…WVVV), and 97 to 117 (LFGF…FFYI).

It belongs to the complex I subunit 3 family. As to quaternary structure, NDH-1 is composed of 14 different subunits. Subunits NuoA, H, J, K, L, M, N constitute the membrane sector of the complex.

The protein localises to the cell inner membrane. It carries out the reaction a quinone + NADH + 5 H(+)(in) = a quinol + NAD(+) + 4 H(+)(out). NDH-1 shuttles electrons from NADH, via FMN and iron-sulfur (Fe-S) centers, to quinones in the respiratory chain. The immediate electron acceptor for the enzyme in this species is believed to be ubiquinone. Couples the redox reaction to proton translocation (for every two electrons transferred, four hydrogen ions are translocated across the cytoplasmic membrane), and thus conserves the redox energy in a proton gradient. This Solibacter usitatus (strain Ellin6076) protein is NADH-quinone oxidoreductase subunit A.